Reading from the N-terminus, the 657-residue chain is MPRALEPAEPILSAEGIPYSPRYDDVYHSTEGGLAQAAHVFLGGNGLPQAWAGQRQFVIVETGFGLGLNFLATWQAWRADPQRCGTLHFVSIEKHPFTREGLAQLHAGLDGLQPLAQALQAQWPLALPGLHRLAFDGGRVVLTLALGDIEQMLPRLAAGADAFYLDGFAPARNTEMWSPQVFRGLARLARPGARLATWAAAGFVRRGLKEVGFEVSRAPGFGGKWQMTVASFRPQWKARRHAPPLPAQWAERHAIVIGAGLAGCAVTERLAARGWRVTLFDGHDGPARQTSAHRAAAMHAHLSADDSLLSRLSRTGNQYALRAWAELAEAGHAVGWHGCGVLQIGEDEAEGEAQRAALAAMRLPEGFVRWMSAEEAAAAHHAGVPRGGLWFPQGGWVAPPDICSAQLAQAGAAVTARFGCRVAAIARVDGQWQALGQDGEVLASAPVLVLANAHEAQQLLPQQHWTMRRVRGQLTTLASAQVDALGGWPDCVVTGAGYLLPRTADGAGRVGSSYDADEGPLVEQPAVHAANLARLSGMLPRQADAVAAIDPATLSGYVGVRTVTHNRLPLVGQVPDEAAALAQAASLRGAHLRDLPRMPGLYAALAYGSRGLTWAALGAELLASQIEGEPLPLESDLADAMDPARLLLRALRHGHTG.

Positions Met1 to Arg233 are tRNA (mnm(5)s(2)U34)-methyltransferase. Residues Ile257 to Gly657 form an FAD-dependent cmnm(5)s(2)U34 oxidoreductase region.

This sequence in the N-terminal section; belongs to the methyltransferase superfamily. tRNA (mnm(5)s(2)U34)-methyltransferase family. In the C-terminal section; belongs to the DAO family. FAD is required as a cofactor.

The protein resides in the cytoplasm. It carries out the reaction 5-aminomethyl-2-thiouridine(34) in tRNA + S-adenosyl-L-methionine = 5-methylaminomethyl-2-thiouridine(34) in tRNA + S-adenosyl-L-homocysteine + H(+). Catalyzes the last two steps in the biosynthesis of 5-methylaminomethyl-2-thiouridine (mnm(5)s(2)U) at the wobble position (U34) in tRNA. Catalyzes the FAD-dependent demodification of cmnm(5)s(2)U34 to nm(5)s(2)U34, followed by the transfer of a methyl group from S-adenosyl-L-methionine to nm(5)s(2)U34, to form mnm(5)s(2)U34. This chain is tRNA 5-methylaminomethyl-2-thiouridine biosynthesis bifunctional protein MnmC, found in Cupriavidus necator (strain ATCC 17699 / DSM 428 / KCTC 22496 / NCIMB 10442 / H16 / Stanier 337) (Ralstonia eutropha).